The sequence spans 393 residues: Formate-dependent phosphoribosylglycinamide formyltransferase (393 aa).

Residues 20 to 21 (EL) and Glu80 each bind N(1)-(5-phospho-beta-D-ribosyl)glycinamide. ATP contacts are provided by residues Arg112, Lys153, 158-163 (SSGKGQ), 193-196 (EAFI), and Glu201. The region spanning 117–306 (RLAAEDLNLP…EFELHVRAVL (190 aa)) is the ATP-grasp domain. Mg(2+) contacts are provided by Glu265 and Glu277. N(1)-(5-phospho-beta-D-ribosyl)glycinamide is bound by residues Asp284, Lys354, and 361-362 (RR).

This sequence belongs to the PurK/PurT family. Homodimer.

It catalyses the reaction N(1)-(5-phospho-beta-D-ribosyl)glycinamide + formate + ATP = N(2)-formyl-N(1)-(5-phospho-beta-D-ribosyl)glycinamide + ADP + phosphate + H(+). The protein operates within purine metabolism; IMP biosynthesis via de novo pathway; N(2)-formyl-N(1)-(5-phospho-D-ribosyl)glycinamide from N(1)-(5-phospho-D-ribosyl)glycinamide (formate route): step 1/1. Involved in the de novo purine biosynthesis. Catalyzes the transfer of formate to 5-phospho-ribosyl-glycinamide (GAR), producing 5-phospho-ribosyl-N-formylglycinamide (FGAR). Formate is provided by PurU via hydrolysis of 10-formyl-tetrahydrofolate. The chain is Formate-dependent phosphoribosylglycinamide formyltransferase from Syntrophotalea carbinolica (strain DSM 2380 / NBRC 103641 / GraBd1) (Pelobacter carbinolicus).